We begin with the raw amino-acid sequence, 282 residues long: MDVVDELIKLHEEHVSGLLRLCGQAGWPDYGEQELKLLVQQGRFFGYQNVSGDIISCIGLFLFGRLTSIGLVIVDKEYQRLGLGRRMVNACITQTDENTAIRLCATKEGLPLYEKAGFHTAGSVRKYSCHSFQPYTKKLDAELTSFREQDFHDLTAADLAAFGGDRSNLLQQLISASCECIIARNQDGQLIGYGLSVQTPANLKFGPIIAPSSDVAAQIITRLAAGKQGPMRIDIPSEHTSLHDSLIEMGFHKDDEPPILFYQKKAPIQNGHLYALISQALG.

In terms of domain architecture, N-acetyltransferase spans 5-140 (DELIKLHEEH…SFQPYTKKLD (136 aa)).

This sequence belongs to the acetyltransferase family.

This is an uncharacterized protein from Bacillus subtilis (strain 168).